The chain runs to 1040 residues: MQVLPPSSTGGPSRLFIMRPVATTLLMVAILLAGIIGYRALPVSALPEVDYPTIQVVTLYPGASPDVMTSAVTAPLERQFGQMSGLKQMSSQSSGGASVITLQFQLTLPLDVAEQEVQAAINAATNLLPSDLPNPPVYSKVNPADPPIMTLAVTSTAMPMTQVEDMVETRVAQKISQISGVGLVTLSGGQRPAVRVKLNAQAIAALGLTSETVRTAITGANVNSAKGSLDGPSRAVTLSANDQMQSAEEYRQLIIAYQNGAPIRLGDVATVEQGAENSWLGAWANKEQAIVMNVQRQPGANIISTADSIRQMLPQLTESLPKSVKVTVLSDRTTNIRASVDDTQFELMMAIALVVMIIYLFLRNIPATIIPGVAVPLSLIGTFAVMVFLDFSINNLTLMALTIATGFVVDDAIVVIENISRYIEKGEKPLAAALKGAGEIGFTIISLTFSLIAVLIPLLFMGDIVGRLFREFAITLAVAILISAVVSLTLTPMMCARMLSQESLRKQNRFSRASEKMFDRIIAAYGRGLAKVLNHPWLTLSVALSTLLLSVLLWVFIPKGFFPVQDNGIIQGTLQAPQSSSFANMAQRQRQVADVILQDPAVQSLTSFVGVDGTNPSLNSARLQINLKPLDERDDRVQKVIARLQTAVDKVPGVDLFLQPTQDLTIDTQVSRTQYQFTLQATSLDALSTWVPQLMEKLQQLPQLSDVSSDWQDKGLVAYVNVDRDSASRLGISMADVDNALYNAFGQRLISTIYTQANQYRVVLEHNTENTPGLAALDTIRLTSSDGGVVPLSSIAKIEQRFAPLSINHLDQFPVTTISFNVPDNYSLGDAVQAIMDTEKTLNLPVDITTQFQGSTLAFQSALGSTVWLIVAAVVAMYIVLGILYESFIHPITILSTLPTAGVGALLALLIAGSELDVIAIIGIILLIGIVKKNAIMMIDFALAAEREQGMSPREAIYQACLLRFRPILMTTLAALLGALPLMLSTGVGAELRRPLGIGMVGGLIVSQVLTLFTTPVIYLLFDRLALWTKSRFARHEEEA.

The next 12 membrane-spanning stretches (helical) occupy residues phenylalanine 16–isoleucine 36, leucine 347–alanine 367, isoleucine 369–leucine 389, leucine 396–isoleucine 416, isoleucine 440–phenylalanine 460, phenylalanine 472–proline 492, tryptophan 537–isoleucine 557, leucine 863–isoleucine 883, phenylalanine 888–alanine 908, isoleucine 911–valine 931, isoleucine 968–valine 988, and isoleucine 998–isoleucine 1018.

The protein belongs to the resistance-nodulation-cell division (RND) (TC 2.A.6) family. MdtB subfamily. Part of a tripartite efflux system composed of MdtA, MdtB and MdtC. MdtB forms a heteromultimer with MdtC.

Its subcellular location is the cell inner membrane. In terms of biological role, the MdtABC tripartite complex confers resistance against novobiocin and deoxycholate. This chain is Multidrug resistance protein MdtB, found in Escherichia coli (strain K12 / MC4100 / BW2952).